We begin with the raw amino-acid sequence, 327 residues long: Chlorophenol reductase (327 aa).

An N-terminal signal peptide occupies residues 1 to 24; sequence MKKTLGIILSISLAFSVLALPIFA. In terms of domain architecture, LysM spans 65–110; that stretch reads TYYTVVSGDFFWQIAAKHGLTIDALAKLNPQIKNVNLIFPGQKILV.

Cob(I)alamin is required as a cofactor.

Its subcellular location is the secreted. The protein localises to the cell wall. The protein resides in the cell membrane. Inhibited by sulfide and to a lesser extent by nitrite. Reductive dechlorination of ortho-chlorophenols. Dechlorinates in the ortho position with respect to the hydroxyl group. The sequence is that of Chlorophenol reductase from Desulfitobacterium hafniense (Desulfitobacterium frappieri).